Reading from the N-terminus, the 330-residue chain is D-cysteine desulfhydrase (330 aa).

Lys-52 carries the post-translational modification N6-(pyridoxal phosphate)lysine.

Belongs to the ACC deaminase/D-cysteine desulfhydrase family. As to quaternary structure, homodimer. Pyridoxal 5'-phosphate serves as cofactor.

It carries out the reaction D-cysteine + H2O = hydrogen sulfide + pyruvate + NH4(+) + H(+). Its function is as follows. Catalyzes the alpha,beta-elimination reaction of D-cysteine and of several D-cysteine derivatives. It could be a defense mechanism against D-cysteine. The chain is D-cysteine desulfhydrase from Yersinia pestis.